Here is a 485-residue protein sequence, read N- to C-terminus: Acetyl-coenzyme A carboxylase carboxyl transferase subunit beta, chloroplastic (485 aa).

The CoA carboxyltransferase N-terminal domain maps to 218-485 (LWIQCDNCYA…FFPLNKNEIK (268 aa)). Zn(2+)-binding residues include Cys-222, Cys-225, Cys-241, and Cys-244. The C4-type zinc-finger motif lies at 222-244 (CDNCYALIYKKALKFKMNVCEQC).

The protein belongs to the AccD/PCCB family. In terms of assembly, acetyl-CoA carboxylase is a heterohexamer composed of biotin carboxyl carrier protein, biotin carboxylase and 2 subunits each of ACCase subunit alpha and ACCase plastid-coded subunit beta (accD). Requires Zn(2+) as cofactor.

Its subcellular location is the plastid. It localises to the chloroplast stroma. It carries out the reaction N(6)-carboxybiotinyl-L-lysyl-[protein] + acetyl-CoA = N(6)-biotinyl-L-lysyl-[protein] + malonyl-CoA. The protein operates within lipid metabolism; malonyl-CoA biosynthesis; malonyl-CoA from acetyl-CoA: step 1/1. In terms of biological role, component of the acetyl coenzyme A carboxylase (ACC) complex. Biotin carboxylase (BC) catalyzes the carboxylation of biotin on its carrier protein (BCCP) and then the CO(2) group is transferred by the transcarboxylase to acetyl-CoA to form malonyl-CoA. This Aethionema cordifolium (Lebanon stonecress) protein is Acetyl-coenzyme A carboxylase carboxyl transferase subunit beta, chloroplastic.